The chain runs to 309 residues: Homoserine kinase (309 aa).

91–101 (PIGSGLGSSAC) provides a ligand contact to ATP.

Belongs to the GHMP kinase family. Homoserine kinase subfamily.

It is found in the cytoplasm. The enzyme catalyses L-homoserine + ATP = O-phospho-L-homoserine + ADP + H(+). The protein operates within amino-acid biosynthesis; L-threonine biosynthesis; L-threonine from L-aspartate: step 4/5. In terms of biological role, catalyzes the ATP-dependent phosphorylation of L-homoserine to L-homoserine phosphate. This chain is Homoserine kinase, found in Buchnera aphidicola subsp. Acyrthosiphon pisum (strain 5A).